The sequence spans 310 residues: Ribosomal RNA small subunit methyltransferase H (310 aa).

S-adenosyl-L-methionine contacts are provided by residues 33 to 35, Asp-53, Phe-79, Asp-100, and Gln-107; that span reads AGH.

This sequence belongs to the methyltransferase superfamily. RsmH family.

It localises to the cytoplasm. The enzyme catalyses cytidine(1402) in 16S rRNA + S-adenosyl-L-methionine = N(4)-methylcytidine(1402) in 16S rRNA + S-adenosyl-L-homocysteine + H(+). In terms of biological role, specifically methylates the N4 position of cytidine in position 1402 (C1402) of 16S rRNA. This chain is Ribosomal RNA small subunit methyltransferase H, found in Clostridium tetani (strain Massachusetts / E88).